We begin with the raw amino-acid sequence, 171 residues long: Transcription factor E (171 aa).

The HTH TFE/IIEalpha-type domain occupies Asp5–Val91.

It belongs to the TFE family. In terms of assembly, monomer. Interaction with RNA polymerase subunits RpoF and RpoE is necessary for Tfe stimulatory transcription activity. Able to interact with Tbp and RNA polymerase in the absence of DNA promoter. Interacts both with the preinitiation and elongation complexes.

Its function is as follows. Transcription factor that plays a role in the activation of archaeal genes transcribed by RNA polymerase. Facilitates transcription initiation by enhancing TATA-box recognition by TATA-box-binding protein (Tbp), and transcription factor B (Tfb) and RNA polymerase recruitment. Not absolutely required for transcription in vitro, but particularly important in cases where Tbp or Tfb function is not optimal. It dynamically alters the nucleic acid-binding properties of RNA polymerases by stabilizing the initiation complex and destabilizing elongation complexes. Seems to translocate with the RNA polymerase following initiation and acts by binding to the non template strand of the transcription bubble in elongation complexes. This chain is Transcription factor E, found in Methanocella arvoryzae (strain DSM 22066 / NBRC 105507 / MRE50).